Here is a 155-residue protein sequence, read N- to C-terminus: Interleukin-2 (155 aa).

An N-terminal signal peptide occupies residues 1-20 (MYKIQLLSCIALTLALVANG). Thr-23 carries an O-linked (GalNAc...) threonine glycan. Cys-79 and Cys-127 form a disulfide bridge.

It belongs to the IL-2 family.

The protein localises to the secreted. In terms of biological role, cytokine produced by activated CD4-positive helper T-cells and to a lesser extend activated CD8-positive T-cells and natural killer (NK) cells that plays pivotal roles in the immune response and tolerance. Binds to a receptor complex composed of either the high-affinity trimeric IL-2R (IL2RA/CD25, IL2RB/CD122 and IL2RG/CD132) or the low-affinity dimeric IL-2R (IL2RB and IL2RG). Interaction with the receptor leads to oligomerization and conformation changes in the IL-2R subunits resulting in downstream signaling starting with phosphorylation of JAK1 and JAK3. In turn, JAK1 and JAK3 phosphorylate the receptor to form a docking site leading to the phosphorylation of several substrates including STAT5. This process leads to activation of several pathways including STAT, phosphoinositide-3-kinase/PI3K and mitogen-activated protein kinase/MAPK pathways. Functions as a T-cell growth factor and can increase NK-cell cytolytic activity as well. Promotes strong proliferation of activated B-cells and subsequently immunoglobulin production. Plays a pivotal role in regulating the adaptive immune system by controlling the survival and proliferation of regulatory T-cells, which are required for the maintenance of immune tolerance. Moreover, participates in the differentiation and homeostasis of effector T-cell subsets, including Th1, Th2, Th17 as well as memory CD8-positive T-cells. This is Interleukin-2 (IL2) from Ovis aries (Sheep).